Reading from the N-terminus, the 159-residue chain is Deoxyuridine 5'-triphosphate nucleotidohydrolase (159 aa).

DUMP is bound by residues S79, G92, D95, Y98, K103, R148, F153, and G154.

This sequence belongs to the dUTPase family. As to quaternary structure, homotrimer. The cofactor is Mg(2+).

The enzyme catalyses dUTP + H2O = dUMP + diphosphate + H(+). The protein operates within pyrimidine metabolism; dUMP biosynthesis; dUMP from dCTP (dUTP route): step 2/2. Its function is as follows. Involved in nucleotide metabolism via production of dUMP, the immediate precursor of thymidine nucleotides, and decreases the intracellular concentration of dUTP so that uracil cannot be incorporated into DNA. The protein is Deoxyuridine 5'-triphosphate nucleotidohydrolase (DUT1) of Candida albicans (strain SC5314 / ATCC MYA-2876) (Yeast).